A 47-amino-acid polypeptide reads, in one-letter code: Delta-actitoxin-Ael1b (47 aa).

Cystine bridges form between Cys-4–Cys-44, Cys-6–Cys-34, and Cys-27–Cys-45.

The protein belongs to the sea anemone sodium channel inhibitory toxin family. Type I subfamily.

The protein resides in the secreted. The protein localises to the nematocyst. In terms of biological role, produces a positive inotropic effect in mammalian heart muscle. Modifies current passing through the fast sodium channel (Nav) in neuroblastoma cells, leading to delayed and incomplete inactivation. Paralyzes the shore crab (C.maenas) by tetanic contractions after intramuscular injection. This is Delta-actitoxin-Ael1b from Anthopleura elegantissima (Green aggregating anemone).